Here is a 205-residue protein sequence, read N- to C-terminus: Adenylyl-sulfate kinase (205 aa).

Glycine 39–serine 46 serves as a coordination point for ATP. Serine 113 functions as the Phosphoserine intermediate in the catalytic mechanism.

The protein belongs to the APS kinase family.

It catalyses the reaction adenosine 5'-phosphosulfate + ATP = 3'-phosphoadenylyl sulfate + ADP + H(+). Its pathway is sulfur metabolism; hydrogen sulfide biosynthesis; sulfite from sulfate: step 2/3. In terms of biological role, catalyzes the synthesis of activated sulfate. In Vibrio parahaemolyticus serotype O3:K6 (strain RIMD 2210633), this protein is Adenylyl-sulfate kinase.